Consider the following 302-residue polypeptide: 4-hydroxy-tetrahydrodipicolinate synthase (302 aa).

T55 serves as a coordination point for pyruvate. Catalysis depends on Y144, which acts as the Proton donor/acceptor. K172 functions as the Schiff-base intermediate with substrate in the catalytic mechanism. V214 provides a ligand contact to pyruvate.

This sequence belongs to the DapA family. Homotetramer; dimer of dimers.

It localises to the cytoplasm. The catalysed reaction is L-aspartate 4-semialdehyde + pyruvate = (2S,4S)-4-hydroxy-2,3,4,5-tetrahydrodipicolinate + H2O + H(+). It participates in amino-acid biosynthesis; L-lysine biosynthesis via DAP pathway; (S)-tetrahydrodipicolinate from L-aspartate: step 3/4. Catalyzes the condensation of (S)-aspartate-beta-semialdehyde [(S)-ASA] and pyruvate to 4-hydroxy-tetrahydrodipicolinate (HTPA). In Prochlorococcus marinus (strain MIT 9303), this protein is 4-hydroxy-tetrahydrodipicolinate synthase.